The sequence spans 269 residues: Polyamine aminopropyltransferase (269 aa).

In terms of domain architecture, PABS spans methionine 1–glutamate 226. S-methyl-5'-thioadenosine is bound at residue glutamine 28. Spermidine is bound by residues histidine 59 and aspartate 83. S-methyl-5'-thioadenosine-binding positions include aspartate 102 and aspartate 133–glycine 134. Residue aspartate 150 is the Proton acceptor of the active site. Position 150–153 (aspartate 150–aspartate 153) interacts with spermidine.

Belongs to the spermidine/spermine synthase family. Homodimer or homotetramer.

The protein localises to the cytoplasm. It catalyses the reaction S-adenosyl 3-(methylsulfanyl)propylamine + putrescine = S-methyl-5'-thioadenosine + spermidine + H(+). The protein operates within amine and polyamine biosynthesis; spermidine biosynthesis; spermidine from putrescine: step 1/1. Its function is as follows. Catalyzes the irreversible transfer of a propylamine group from the amino donor S-adenosylmethioninamine (decarboxy-AdoMet) to putrescine (1,4-diaminobutane) to yield spermidine. The sequence is that of Polyamine aminopropyltransferase from Archaeoglobus fulgidus (strain ATCC 49558 / DSM 4304 / JCM 9628 / NBRC 100126 / VC-16).